A 96-amino-acid chain; its full sequence is Large ribosomal subunit protein uL23 (96 aa).

The protein belongs to the universal ribosomal protein uL23 family. Part of the 50S ribosomal subunit. Contacts protein L29, and trigger factor when it is bound to the ribosome.

One of the early assembly proteins it binds 23S rRNA. One of the proteins that surrounds the polypeptide exit tunnel on the outside of the ribosome. Forms the main docking site for trigger factor binding to the ribosome. This is Large ribosomal subunit protein uL23 from Halalkalibacterium halodurans (strain ATCC BAA-125 / DSM 18197 / FERM 7344 / JCM 9153 / C-125) (Bacillus halodurans).